The primary structure comprises 143 residues: D-aminoacyl-tRNA deacylase (143 aa).

The Gly-cisPro motif, important for rejection of L-amino acids motif lies at Gly-135–Pro-136.

Belongs to the DTD family. As to quaternary structure, homodimer.

The protein resides in the cytoplasm. It catalyses the reaction glycyl-tRNA(Ala) + H2O = tRNA(Ala) + glycine + H(+). The enzyme catalyses a D-aminoacyl-tRNA + H2O = a tRNA + a D-alpha-amino acid + H(+). In terms of biological role, an aminoacyl-tRNA editing enzyme that deacylates mischarged D-aminoacyl-tRNAs. Also deacylates mischarged glycyl-tRNA(Ala), protecting cells against glycine mischarging by AlaRS. Acts via tRNA-based rather than protein-based catalysis; rejects L-amino acids rather than detecting D-amino acids in the active site. By recycling D-aminoacyl-tRNA to D-amino acids and free tRNA molecules, this enzyme counteracts the toxicity associated with the formation of D-aminoacyl-tRNA entities in vivo and helps enforce protein L-homochirality. In Mycolicibacterium smegmatis (strain ATCC 700084 / mc(2)155) (Mycobacterium smegmatis), this protein is D-aminoacyl-tRNA deacylase.